The sequence spans 458 residues: ATP synthase subunit beta (458 aa).

An ATP-binding site is contributed by 147–154 (GGAGVGKT).

Belongs to the ATPase alpha/beta chains family. As to quaternary structure, F-type ATPases have 2 components, CF(1) - the catalytic core - and CF(0) - the membrane proton channel. CF(1) has five subunits: alpha(3), beta(3), gamma(1), delta(1), epsilon(1). CF(0) has three main subunits: a(1), b(2) and c(9-12). The alpha and beta chains form an alternating ring which encloses part of the gamma chain. CF(1) is attached to CF(0) by a central stalk formed by the gamma and epsilon chains, while a peripheral stalk is formed by the delta and b chains.

It is found in the cell inner membrane. It carries out the reaction ATP + H2O + 4 H(+)(in) = ADP + phosphate + 5 H(+)(out). Its function is as follows. Produces ATP from ADP in the presence of a proton gradient across the membrane. The catalytic sites are hosted primarily by the beta subunits. This Chromohalobacter salexigens (strain ATCC BAA-138 / DSM 3043 / CIP 106854 / NCIMB 13768 / 1H11) protein is ATP synthase subunit beta.